The sequence spans 75 residues: uncharacterized protein (75 aa).

Helical transmembrane passes span 5–25 (VIICLLFTYYVIWSLLPIFEI) and 42–62 (VAIFLPIFLLLIGFTLTGSVL).

It is found in the membrane. This is an uncharacterized protein from Saccharomyces cerevisiae (strain ATCC 204508 / S288c) (Baker's yeast).